A 447-amino-acid polypeptide reads, in one-letter code: Pup--protein ligase 2 (447 aa).

E4 lines the Mg(2+) pocket. R48 lines the ATP pocket. Position 50 (Y50) interacts with Mg(2+). D52 serves as the catalytic Proton acceptor. E58 provides a ligand contact to Mg(2+). ATP contacts are provided by T61 and W414.

It belongs to the Pup ligase/Pup deamidase family. Pup-conjugating enzyme subfamily.

The catalysed reaction is ATP + [prokaryotic ubiquitin-like protein]-L-glutamate + [protein]-L-lysine = ADP + phosphate + N(6)-([prokaryotic ubiquitin-like protein]-gamma-L-glutamyl)-[protein]-L-lysine.. Its pathway is protein degradation; proteasomal Pup-dependent pathway. The protein operates within protein modification; protein pupylation. Functionally, catalyzes the covalent attachment of the prokaryotic ubiquitin-like protein modifier Pup to the proteasomal substrate proteins, thereby targeting them for proteasomal degradation. This tagging system is termed pupylation. The ligation reaction involves the side-chain carboxylate of the C-terminal glutamate of Pup and the side-chain amino group of a substrate lysine. This is Pup--protein ligase 2 from Rhodococcus erythropolis (Arthrobacter picolinophilus).